Reading from the N-terminus, the 433-residue chain is Zinc finger and SCAN domain-containing protein 4 (433 aa).

Residues 44–126 (RMVLNSFQDS…RFMEDLTDDS (83 aa)) enclose the SCAN box domain. Polar residues-rich tracts occupy residues 162–184 (SAQTPREANMGTPSQTSQDTSLE) and 277–298 (QPEQSSPESALTHQSNEGNSTC). Disordered stretches follow at residues 162-199 (SAQTPREANMGTPSQTSQDTSLETGEGCEDEQDGCNSS) and 272-298 (AGCISQPEQSSPESALTHQSNEGNSTC). 4 consecutive C2H2-type zinc fingers follow at residues 312-334 (YKCEECPKVFKYLCHLLAHQRRH), 340-362 (FVCPECQKGFFQISDLRVHQIIH), 368-390 (FTCSMCEKSFSHKTNLRSHERIH), and 396-418 (YTCPFCKTSYRQSSTYHRHMRTH). The interval 414–433 (HMRTHEKITPPSVPSTPEAS) is disordered.

The protein localises to the nucleus. The protein resides in the chromosome. It is found in the telomere. Its function is as follows. Embryonic stem (ES) cell-specific transcription factor required to regulate ES cell pluripotency. Binds telomeres and plays a key role in genomic stability in ES cells by regulating telomere elongation. Acts as an activator of spontaneous telomere sister chromatid exchange (T-SCE) and telomere elongation in undifferentiated ES cells. This is Zinc finger and SCAN domain-containing protein 4 (ZSCAN4) from Pongo pygmaeus (Bornean orangutan).